The chain runs to 236 residues: Small ribosomal subunit protein uS2c (236 aa).

It belongs to the universal ribosomal protein uS2 family.

The protein localises to the plastid. It localises to the chloroplast. In Oryza sativa (Rice), this protein is Small ribosomal subunit protein uS2c (rps2).